We begin with the raw amino-acid sequence, 330 residues long: Taste receptor type 2 member 117 (330 aa).

The Extracellular portion of the chain corresponds to M1–L16. The chain crosses the membrane as a helical span at residues S17–V37. Residues H38–Q53 lie on the Cytoplasmic side of the membrane. Residues I54–V74 traverse the membrane as a helical segment. The Extracellular segment spans residues I75 to A95. N76 carries N-linked (GlcNAc...) asparagine glycosylation. Residues W96–L116 form a helical membrane-spanning segment. Over K117–K135 the chain is Cytoplasmic. A helical transmembrane segment spans residues V136–N156. The Extracellular portion of the chain corresponds to L157 to H190. N-linked (GlcNAc...) asparagine glycosylation occurs at N169. Residues I191–S211 form a helical membrane-spanning segment. Topologically, residues L212–Q239 are cytoplasmic. Residues T240–W260 form a helical membrane-spanning segment. Topologically, residues K261–L269 are extracellular. The helical transmembrane segment at F270–I290 threads the bilayer. The Cytoplasmic portion of the chain corresponds to V291 to F330.

It belongs to the G-protein coupled receptor T2R family.

The protein localises to the membrane. In terms of biological role, putative taste receptor which may play a role in the perception of bitterness. The chain is Taste receptor type 2 member 117 from Mus musculus (Mouse).